The primary structure comprises 465 residues: Chromosomal replication initiator protein DnaA (465 aa).

Residues 1–87 (MLWTDCLTRL…RPGSILSSSE (87 aa)) form a domain I, interacts with DnaA modulators region. The interval 81–123 (SILSSSEQPATTTAALQTAPIPQPAKVKREPEPVANTAVSSKS) is disordered. Residues 88-100 (QPATTTAALQTAP) show a composition bias toward low complexity. Residues 88-127 (QPATTTAALQTAPIPQPAKVKREPEPVANTAVSSKSSKKK) are domain II. Residues 128–345 (LLNPQFTFSL…GALNKVVAIS (218 aa)) are domain III, AAA+ region. ATP contacts are provided by G173, G175, K176, and T177. The segment at 346–465 (RFKGAPIDLD…YKNLLRLLQS (120 aa)) is domain IV, binds dsDNA.

The protein belongs to the DnaA family. In terms of assembly, oligomerizes as a right-handed, spiral filament on DNA at oriC.

The protein resides in the cytoplasm. Its function is as follows. Plays an essential role in the initiation and regulation of chromosomal replication. ATP-DnaA binds to the origin of replication (oriC) to initiate formation of the DNA replication initiation complex once per cell cycle. Binds the DnaA box (a 9 base pair repeat at the origin) and separates the double-stranded (ds)DNA. Forms a right-handed helical filament on oriC DNA; dsDNA binds to the exterior of the filament while single-stranded (ss)DNA is stabiized in the filament's interior. The ATP-DnaA-oriC complex binds and stabilizes one strand of the AT-rich DNA unwinding element (DUE), permitting loading of DNA polymerase. After initiation quickly degrades to an ADP-DnaA complex that is not apt for DNA replication. Binds acidic phospholipids. In Acinetobacter baumannii (strain ATCC 17978 / DSM 105126 / CIP 53.77 / LMG 1025 / NCDC KC755 / 5377), this protein is Chromosomal replication initiator protein DnaA.